A 485-amino-acid chain; its full sequence is Glutamyl-tRNA(Gln) amidotransferase subunit A (485 aa).

Residues Lys79 and Ser154 each act as charge relay system in the active site. Ser178 (acyl-ester intermediate) is an active-site residue.

This sequence belongs to the amidase family. GatA subfamily. Heterotrimer of A, B and C subunits.

It catalyses the reaction L-glutamyl-tRNA(Gln) + L-glutamine + ATP + H2O = L-glutaminyl-tRNA(Gln) + L-glutamate + ADP + phosphate + H(+). In terms of biological role, allows the formation of correctly charged Gln-tRNA(Gln) through the transamidation of misacylated Glu-tRNA(Gln) in organisms which lack glutaminyl-tRNA synthetase. The reaction takes place in the presence of glutamine and ATP through an activated gamma-phospho-Glu-tRNA(Gln). This is Glutamyl-tRNA(Gln) amidotransferase subunit A from Sulfurihydrogenibium sp. (strain YO3AOP1).